A 176-amino-acid polypeptide reads, in one-letter code: Nascent polypeptide-associated complex subunit alpha (176 aa).

Residues 16-80 (PKNEKKAREL…AKVDDMNQRI (65 aa)) form the NAC-A/B domain. The disordered stretch occupies residues 83–110 (AQAAQAAETDAHAGHTHSHGEEDKSPEA). A compositionally biased stretch (basic and acidic residues) spans 91 to 110 (TDAHAGHTHSHGEEDKSPEA). Residues 138 to 175 (LDAKDIDIIVEQTQVSRAKAVKALRKHDGDMVNAIMEL) form the UBA domain.

It belongs to the NAC-alpha family. In terms of assembly, part of the nascent polypeptide-associated complex (NAC), consisting of EGD2 and EGD1. NAC associates with ribosomes via EGD1.

The protein localises to the cytoplasm. Its subcellular location is the nucleus. Its function is as follows. Component of the nascent polypeptide-associated complex (NAC), a dynamic component of the ribosomal exit tunnel, protecting the emerging polypeptides from interaction with other cytoplasmic proteins to ensure appropriate nascent protein targeting. The NAC complex also promotes mitochondrial protein import by enhancing productive ribosome interactions with the outer mitochondrial membrane and blocks the inappropriate interaction of ribosomes translating non-secretory nascent polypeptides with translocation sites in the membrane of the endoplasmic reticulum. EGD2 may also be involved in transcription regulation. This is Nascent polypeptide-associated complex subunit alpha (EGD2) from Scheffersomyces stipitis (strain ATCC 58785 / CBS 6054 / NBRC 10063 / NRRL Y-11545) (Yeast).